The sequence spans 250 residues: Exosome complex component Rrp41 (250 aa).

Belongs to the RNase PH family. Rrp41 subfamily. Component of the archaeal exosome complex. Forms a hexameric ring-like arrangement composed of 3 Rrp41-Rrp42 heterodimers. The hexameric ring associates with a trimer of Rrp4 and/or Csl4 subunits.

The protein resides in the cytoplasm. Its function is as follows. Catalytic component of the exosome, which is a complex involved in RNA degradation. Has 3'-&gt;5' exoribonuclease activity. Can also synthesize heteromeric RNA-tails. In Pyrococcus furiosus (strain ATCC 43587 / DSM 3638 / JCM 8422 / Vc1), this protein is Exosome complex component Rrp41.